Here is a 376-residue protein sequence, read N- to C-terminus: Succinyl-diaminopimelate desuccinylase (376 aa).

His-66 contacts Zn(2+). Asp-68 is a catalytic residue. Residue Asp-99 participates in Zn(2+) binding. Glu-133 functions as the Proton acceptor in the catalytic mechanism. Zn(2+)-binding residues include Glu-134, Glu-162, and His-348.

The protein belongs to the peptidase M20A family. DapE subfamily. Homodimer. Requires Zn(2+) as cofactor. Co(2+) serves as cofactor.

The enzyme catalyses N-succinyl-(2S,6S)-2,6-diaminopimelate + H2O = (2S,6S)-2,6-diaminopimelate + succinate. It functions in the pathway amino-acid biosynthesis; L-lysine biosynthesis via DAP pathway; LL-2,6-diaminopimelate from (S)-tetrahydrodipicolinate (succinylase route): step 3/3. In terms of biological role, catalyzes the hydrolysis of N-succinyl-L,L-diaminopimelic acid (SDAP), forming succinate and LL-2,6-diaminopimelate (DAP), an intermediate involved in the bacterial biosynthesis of lysine and meso-diaminopimelic acid, an essential component of bacterial cell walls. The protein is Succinyl-diaminopimelate desuccinylase of Xanthomonas euvesicatoria pv. vesicatoria (strain 85-10) (Xanthomonas campestris pv. vesicatoria).